Reading from the N-terminus, the 486-residue chain is Membrane-bound lytic murein transglycosylase F (486 aa).

An N-terminal signal peptide occupies residues 1-21; the sequence is MTRIKLSYFTIGLVALLLALA. The non-LT domain stretch occupies residues 22 to 268; it reads LWPNIPWRNG…RLEEKYLGHV (247 aa). Residues 269–486 are LT domain; sequence GSFDYVDTKT…VVGPGWSIGD (218 aa). Glu313 is a catalytic residue.

It in the N-terminal section; belongs to the bacterial solute-binding protein 3 family. The protein in the C-terminal section; belongs to the transglycosylase Slt family.

It is found in the cell outer membrane. The catalysed reaction is Exolytic cleavage of the (1-&gt;4)-beta-glycosidic linkage between N-acetylmuramic acid (MurNAc) and N-acetylglucosamine (GlcNAc) residues in peptidoglycan, from either the reducing or the non-reducing ends of the peptidoglycan chains, with concomitant formation of a 1,6-anhydrobond in the MurNAc residue.. Functionally, murein-degrading enzyme that degrades murein glycan strands and insoluble, high-molecular weight murein sacculi, with the concomitant formation of a 1,6-anhydromuramoyl product. Lytic transglycosylases (LTs) play an integral role in the metabolism of the peptidoglycan (PG) sacculus. Their lytic action creates space within the PG sacculus to allow for its expansion as well as for the insertion of various structures such as secretion systems and flagella. This is Membrane-bound lytic murein transglycosylase F from Yersinia pestis bv. Antiqua (strain Antiqua).